A 461-amino-acid chain; its full sequence is Argininosuccinate lyase (461 aa).

This sequence belongs to the lyase 1 family. Argininosuccinate lyase subfamily.

The protein localises to the cytoplasm. The catalysed reaction is 2-(N(omega)-L-arginino)succinate = fumarate + L-arginine. Its pathway is amino-acid biosynthesis; L-arginine biosynthesis; L-arginine from L-ornithine and carbamoyl phosphate: step 3/3. This is Argininosuccinate lyase from Nitrosomonas europaea (strain ATCC 19718 / CIP 103999 / KCTC 2705 / NBRC 14298).